A 390-amino-acid chain; its full sequence is Multidrug export protein EmrA (390 aa).

Over 1–25 (MTQIATENPSTKSVSNKTDRKKGLS) the chain is Cytoplasmic. The helical transmembrane segment at 26–46 (IFILLLLIIGIACALYWFFFL) threads the bilayer. Residues 47 to 390 (KDFEETEDAY…IESIIQQNSH (344 aa)) are Periplasmic-facing. Residues 160–190 (FQHAKEAVELAKANLNASKNQLAANQALLRN) are a coiled coil.

This sequence belongs to the membrane fusion protein (MFP) (TC 8.A.1) family.

It is found in the cell inner membrane. Confers resistance to antibiotics. In Haemophilus influenzae (strain ATCC 51907 / DSM 11121 / KW20 / Rd), this protein is Multidrug export protein EmrA (emrA).